Reading from the N-terminus, the 239-residue chain is UPF0641 membrane protein YHR140W (239 aa).

Residues 1 to 11 (MMSCLVPTRFT) lie on the Cytoplasmic side of the membrane. Residues 12-31 (LTLNTACLLTSTWGFVRATS) form a helical membrane-spanning segment. The Lumenal portion of the chain corresponds to 32–45 (VVLPPSLSKAGHKQ). The chain crosses the membrane as a helical span at residues 46-66 (FLTIISIIATIINNAVNISNY). The Cytoplasmic portion of the chain corresponds to 67-99 (YIQRNNKMNLETKKKSDFISRHVTLPVSLVLES). Residues 100–120 (IVATVYWPLRLFFVNLIMHGV) form a helical membrane-spanning segment. Residues 121-125 (ESTAK) are Lumenal-facing. Residues 126 to 146 (TPFPMTVDMAIHLYPILYLLA) form a helical membrane-spanning segment. The Cytoplasmic segment spans residues 147-162 (DHYLSGSGTKFKLSNK). A helical transmembrane segment spans residues 163–183 (HAWLIVTSLAFSYFQYLAFLI). Residues 184–204 (DAGQGQAYPYPFLDVNEPYKS) are Lumenal-facing. Residues 205 to 225 (IIFVVVATITWAYYVFYQKFP) form a helical membrane-spanning segment. Residues 226–239 (PKYIKKSAKKGDKN) lie on the Cytoplasmic side of the membrane.

The protein belongs to the UPF0641 family.

The protein localises to the endoplasmic reticulum membrane. This is UPF0641 membrane protein YHR140W from Saccharomyces cerevisiae (strain ATCC 204508 / S288c) (Baker's yeast).